A 528-amino-acid polypeptide reads, in one-letter code: Protein MGF 505-7R (528 aa).

2 ANK repeats span residues 54–83 and 261–291; these read SINDALLLAGEEGDTDVVQLLLLWEGNLHY and NIHRALSYAVSHNRRKILDYLIRQKNIPPNT.

Belongs to the asfivirus MGF 505 family. As to quaternary structure, interacts with host STING1. Interacts with host JAK1; this interaction leads to JAK1 degradation. Interacts with host JAK2; this interaction leads to JAK2 degradation. Interacts with host RELA; this interaction inhibits NF-kappa-B promoter activity.

It localises to the host cytoplasm. Its function is as follows. Plays a role in virus cell tropism, and may be required for efficient virus replication in macrophages. Interferes with host NF-kappa-B promoter activity mediated by TLR8. Mechanistically, inhibits the phosphorylation and subsequent nuclear translocation of host NF-kappa-B RELA subunit downstream of TLR8. Promotes the expression of the autophagy-related protein host ULK1 to degrade host STING and inhibit the interferon response. Also inhibits JAK1- and JAK2-mediated signaling and thus negatively regulates the IFN-gamma signaling. The chain is Protein MGF 505-7R from African swine fever virus (isolate Tick/Malawi/Lil 20-1/1983) (ASFV).